The sequence spans 191 residues: Leucyl/phenylalanyl-tRNA--protein transferase (191 aa).

This sequence belongs to the L/F-transferase family.

It is found in the cytoplasm. The catalysed reaction is N-terminal L-lysyl-[protein] + L-leucyl-tRNA(Leu) = N-terminal L-leucyl-L-lysyl-[protein] + tRNA(Leu) + H(+). It catalyses the reaction N-terminal L-arginyl-[protein] + L-leucyl-tRNA(Leu) = N-terminal L-leucyl-L-arginyl-[protein] + tRNA(Leu) + H(+). It carries out the reaction L-phenylalanyl-tRNA(Phe) + an N-terminal L-alpha-aminoacyl-[protein] = an N-terminal L-phenylalanyl-L-alpha-aminoacyl-[protein] + tRNA(Phe). Functionally, functions in the N-end rule pathway of protein degradation where it conjugates Leu, Phe and, less efficiently, Met from aminoacyl-tRNAs to the N-termini of proteins containing an N-terminal arginine or lysine. This Rubrobacter xylanophilus (strain DSM 9941 / JCM 11954 / NBRC 16129 / PRD-1) protein is Leucyl/phenylalanyl-tRNA--protein transferase.